The sequence spans 884 residues: DNA replication licensing factor mcm2 (884 aa).

A compositionally biased stretch (polar residues) spans 1–16 (MADSSESFNIATSPRT). 2 disordered regions span residues 1–61 (MADS…IGDA) and 120–151 (LYDSDEEDEDRPARKRRMAERAAEGAPEEDEE). Positions 47–58 (PREEEEDGEELI) are enriched in acidic residues. A C4-type zinc finger spans residues 314–340 (CNKCNFILGPFFQSQNQEVKPGSCPEC). The MCM domain maps to 458-664 (IGERIFASIA…VQDEMLARFV (207 aa)). ADP-binding residues include serine 515 and glutamine 516. The Arginine finger signature appears at 640–643 (SRFD).

It belongs to the MCM family. Component of the mcm2-7 complex (RLF-M). The complex forms a toroidal hexameric ring with the proposed subunit order mcm2-mcm6-mcm4-mcm7-mcm3-mcm5. Component of the replisome complex. Component of the CMG helicase complex, composed of the mcm2-7 complex, the GINS complex and cdc45. May be in a phosphorylated state in the mitotic mcm complex. Phosphorylated in the interphase mcm complex. Phosphorylated by the cdc7-dbf4 and cdc7-dbf4b complexes.

The protein localises to the nucleus. Its subcellular location is the chromosome. It carries out the reaction ATP + H2O = ADP + phosphate + H(+). Functionally, acts as a component of the MCM2-7 complex (MCM complex) which is the replicative helicase essential for 'once per cell cycle' DNA replication initiation and elongation in eukaryotic cells. Core component of CDC45-MCM-GINS (CMG) helicase, the molecular machine that unwinds template DNA during replication, and around which the replisome is built. The active ATPase sites in the MCM2-7 ring are formed through the interaction surfaces of two neighboring subunits such that a critical structure of a conserved arginine finger motif is provided in trans relative to the ATP-binding site of the Walker A box of the adjacent subunit. The six ATPase active sites, however, are likely to contribute differentially to the complex helicase activity. Required for the entry in S phase and for cell division. This is DNA replication licensing factor mcm2 from Xenopus tropicalis (Western clawed frog).